The sequence spans 20 residues: Blooming-related protein 2 (20 aa).

The disordered stretch occupies residues 1–20; it reads VSAEYLERQGPKDDXDCFDD.

Possible 'checkpoint' protein for cell division in the blooming process. The protein is Blooming-related protein 2 of Prorocentrum triestinum (Red tide alga).